The following is a 579-amino-acid chain: uncharacterized protein (579 aa).

3 helical membrane passes run 173 to 193, 196 to 216, and 218 to 238; these read IAMG…GGLA, FVAA…MIGA, and YLGT…GFGA.

This sequence belongs to the TMCO4 family.

Its subcellular location is the cytoplasm. The protein localises to the nucleus membrane. This is an uncharacterized protein from Schizosaccharomyces pombe (strain 972 / ATCC 24843) (Fission yeast).